A 972-amino-acid polypeptide reads, in one-letter code: Coatomer subunit beta (972 aa).

HEAT repeat units follow at residues 79–113 (LLYFYWEIVPKLDQDGKLRHEMILVCNAIQHDLQH), 133–170 (ELLEQMVPSTLACLEYRHAYVRKYAILAVLSIYKVSEH), 317–354 (GCLEELTLDILRVLNAEDIDVRSKALTIAMDLVTSRNI), 397–434 (EIAANIVSLLLDFITDLNSVAANGVIAFVKDVVELYPQ), and 481–518 (RQSIGEIPILQTELKNQRKSQDEDDEATEESATKQAGP). The tract at residues 494–522 (LKNQRKSQDEDDEATEESATKQAGPVILP) is disordered.

In terms of assembly, oligomeric complex that consists of at least the alpha, beta, beta', gamma, delta, epsilon and zeta subunits.

The protein resides in the cytoplasm. It is found in the golgi apparatus membrane. Its subcellular location is the cytoplasmic vesicle. It localises to the COPI-coated vesicle membrane. The coatomer is a cytosolic protein complex that binds to dilysine motifs and reversibly associates with Golgi non-clathrin-coated vesicles, which further mediate biosynthetic protein transport from the ER, via the Golgi up to the trans Golgi network. Coatomer complex is required for budding from Golgi membranes, and is essential for the retrograde Golgi-to-ER transport of dilysine-tagged proteins. The chain is Coatomer subunit beta from Candida glabrata (strain ATCC 2001 / BCRC 20586 / JCM 3761 / NBRC 0622 / NRRL Y-65 / CBS 138) (Yeast).